The sequence spans 474 residues: ATP synthase subunit beta (474 aa).

Residue 158–165 (GGAGVGKT) coordinates ATP.

The protein belongs to the ATPase alpha/beta chains family. F-type ATPases have 2 components, CF(1) - the catalytic core - and CF(0) - the membrane proton channel. CF(1) has five subunits: alpha(3), beta(3), gamma(1), delta(1), epsilon(1). CF(0) has three main subunits: a(1), b(2) and c(9-12). The alpha and beta chains form an alternating ring which encloses part of the gamma chain. CF(1) is attached to CF(0) by a central stalk formed by the gamma and epsilon chains, while a peripheral stalk is formed by the delta and b chains.

Its subcellular location is the cell membrane. The enzyme catalyses ATP + H2O + 4 H(+)(in) = ADP + phosphate + 5 H(+)(out). Its function is as follows. Produces ATP from ADP in the presence of a proton gradient across the membrane. The catalytic sites are hosted primarily by the beta subunits. The protein is ATP synthase subunit beta of Tropheryma whipplei (strain Twist) (Whipple's bacillus).